The chain runs to 354 residues: COP9 signalosome complex subunit 5 (354 aa).

The region spanning Val-56–Asp-193 is the MPN domain. The Zn(2+) site is built by His-139, His-141, and Asp-152. The short motif at His-139 to Asp-152 is the JAMM motif element. The tract at residues Asp-193–Ser-212 is disordered.

The protein belongs to the peptidase M67A family. CSN5 subfamily. In terms of assembly, component of the COP9 signalosome (CSN) complex.

It localises to the cytoplasm. The protein localises to the nucleus. Functionally, catalytic Component of the COP9 signalosome (CSN) complex that acts as an regulator of the ubiquitin (Ubl) conjugation pathway by mediating the deneddylation of the cullin subunit of SCF-type E3 ubiquitin-protein ligase complexes. The chain is COP9 signalosome complex subunit 5 (RRI1) from Yarrowia lipolytica (strain CLIB 122 / E 150) (Yeast).